The sequence spans 260 residues: DNA import protein CedA (260 aa).

6 helical membrane-spanning segments follow: residues 13 to 33, 47 to 67, 110 to 130, 140 to 160, 169 to 189, and 220 to 240; these read LLASLTYFIGAAIYALPVPVY, IYVVVWNSIYLGVLLFLGELL, ALIQVVPFGALLTVITSALTF, IVYQYVAVFIATGVLFLSIPF, AFIGSGIVFYVGLPYLPQFLA, and IITSLVIGPVIYIFILVGFSM.

As to quaternary structure, forms a complex composed of CedA, CedA1 and CedA2.

It is found in the cell membrane. Functionally, part of the Ced system, which is involved in DNA import. This is DNA import protein CedA from Sulfolobus acidocaldarius (strain ATCC 33909 / DSM 639 / JCM 8929 / NBRC 15157 / NCIMB 11770).